A 256-amino-acid polypeptide reads, in one-letter code: uncharacterized protein (256 aa).

This sequence to B.subtilis LplA.

This is an uncharacterized protein from Niallia circulans (Bacillus circulans).